A 395-amino-acid chain; its full sequence is Chorismate synthase (395 aa).

Arg40 and Arg46 together coordinate NADP(+). FMN contacts are provided by residues 135 to 137 and 256 to 257; these read RAS and QA. Over residues 272–283 the composition is skewed to basic and acidic residues; sequence RRGSQAHDEMRP. The disordered stretch occupies residues 272-296; that stretch reads RRGSQAHDEMRPGPDGILRSTNRAG. FMN contacts are provided by residues Gly300, 315-319, and Arg341; that span reads KPIST.

It belongs to the chorismate synthase family. Homotetramer. FMNH2 serves as cofactor.

It carries out the reaction 5-O-(1-carboxyvinyl)-3-phosphoshikimate = chorismate + phosphate. Its pathway is metabolic intermediate biosynthesis; chorismate biosynthesis; chorismate from D-erythrose 4-phosphate and phosphoenolpyruvate: step 7/7. In terms of biological role, catalyzes the anti-1,4-elimination of the C-3 phosphate and the C-6 proR hydrogen from 5-enolpyruvylshikimate-3-phosphate (EPSP) to yield chorismate, which is the branch point compound that serves as the starting substrate for the three terminal pathways of aromatic amino acid biosynthesis. This reaction introduces a second double bond into the aromatic ring system. This chain is Chorismate synthase, found in Rhodococcus jostii (strain RHA1).